Here is a 119-residue protein sequence, read N- to C-terminus: NADH-quinone oxidoreductase subunit 7 (119 aa).

Helical transmembrane passes span 11-31 (LIYV…GALL), 59-79 (VHFY…AFLW), and 88-108 (LGLY…VGFL).

Belongs to the complex I subunit 3 family. NDH-1 is composed of 15 different subunits, Nqo1 to Nqo15. The complex has a L-shaped structure, with the hydrophobic arm (subunits Nqo7, Nqo8 and Nqo10 to Nqo14) embedded in the membrane and the hydrophilic peripheral arm (subunits Nqo1 to Nqo6, Nqo9 and Nqo15) protruding into the bacterial cytoplasm. The hydrophilic domain contains all the redox centers.

It is found in the cell inner membrane. The enzyme catalyses a quinone + NADH + 5 H(+)(in) = a quinol + NAD(+) + 4 H(+)(out). In terms of biological role, NDH-1 shuttles electrons from NADH, via FMN and iron-sulfur (Fe-S) centers, to quinones in the respiratory chain. The immediate electron acceptor for the enzyme in this species is menaquinone. Couples the redox reaction to proton translocation (for every two electrons transferred, four hydrogen ions are translocated across the cytoplasmic membrane), and thus conserves the redox energy in a proton gradient required for the synthesis of ATP. The polypeptide is NADH-quinone oxidoreductase subunit 7 (nqo7) (Thermus thermophilus (strain ATCC 27634 / DSM 579 / HB8)).